The following is a 444-amino-acid chain: Gamma-glutamyl phosphate reductase (444 aa).

Belongs to the gamma-glutamyl phosphate reductase family.

It is found in the cytoplasm. The catalysed reaction is L-glutamate 5-semialdehyde + phosphate + NADP(+) = L-glutamyl 5-phosphate + NADPH + H(+). The protein operates within amino-acid biosynthesis; L-proline biosynthesis; L-glutamate 5-semialdehyde from L-glutamate: step 2/2. Its function is as follows. Catalyzes the NADPH-dependent reduction of L-glutamate 5-phosphate into L-glutamate 5-semialdehyde and phosphate. The product spontaneously undergoes cyclization to form 1-pyrroline-5-carboxylate. This Albidiferax ferrireducens (strain ATCC BAA-621 / DSM 15236 / T118) (Rhodoferax ferrireducens) protein is Gamma-glutamyl phosphate reductase.